An 838-amino-acid polypeptide reads, in one-letter code: G-protein coupled receptor-associated sorting protein 2 (838 aa).

Disordered regions lie at residues 1-121 (MTGA…PGAR), 218-293 (ASNE…NPFS), and 531-552 (LELSPEGEEQESLLQPDQPSPE). Positions 13–31 (KPEKKAGEEVVAGPEREND) are enriched in basic and acidic residues. The segment covering 220–235 (NESGFWSADETSTASS) has biased composition (polar residues). Over residues 255–271 (RSRHRAKHQTNPRSRPR) the composition is skewed to basic residues. Residues Ser282 and Ser284 each carry the phosphoserine modification. Residues 542–552 (SLLQPDQPSPE) are compositionally biased toward polar residues.

Belongs to the GPRASP family. Interacts with cytoplasmic tails of a variety of G protein-coupled receptors such as muscarinic acetylcholine receptor M1/CHRM1 and calcitonin receptor/CALCR.

May play a role in regulation of a variety of G-protein coupled receptors. The sequence is that of G-protein coupled receptor-associated sorting protein 2 (GPRASP2) from Pongo abelii (Sumatran orangutan).